A 492-amino-acid polypeptide reads, in one-letter code: N-succinylglutamate 5-semialdehyde dehydrogenase (492 aa).

Residue 220 to 225 (GSANTG) participates in NAD(+) binding. Catalysis depends on residues E243 and C277.

It belongs to the aldehyde dehydrogenase family. AstD subfamily.

The catalysed reaction is N-succinyl-L-glutamate 5-semialdehyde + NAD(+) + H2O = N-succinyl-L-glutamate + NADH + 2 H(+). Its pathway is amino-acid degradation; L-arginine degradation via AST pathway; L-glutamate and succinate from L-arginine: step 4/5. Functionally, catalyzes the NAD-dependent reduction of succinylglutamate semialdehyde into succinylglutamate. The chain is N-succinylglutamate 5-semialdehyde dehydrogenase from Escherichia coli (strain 55989 / EAEC).